We begin with the raw amino-acid sequence, 282 residues long: Heat stress transcription factor A-7b (282 aa).

Low complexity-rich tracts occupy residues 1-11 and 120-134; these read MDPSSSSRARS and SSSS…QSQP. Disordered regions lie at residues 1–24 and 117–139; these read MDPS…LQEA and RRTS…AHDP. Residues 26-120 mediate DNA binding; that stretch reads PSPFLTKTFE…LLKSIKRRTS (95 aa). A hydrophobic repeat HR-A/B region spans residues 137-196; it reads HDPGVELPQLREERHVLMMEISTLRQEEQRARGYVQAMEQRINGAEKKQRHMMSFLRRAV. Positions 208–212 match the Nuclear localization signal motif; that stretch reads QKRDR. Positions 232–240 match the Nuclear export signal motif; it reads LSELEALAL. Residues 259-268 carry the AHA motif; sequence DGFWEELLMN.

It belongs to the HSF family. Class A subfamily. Homotrimer. Post-translationally, exhibits temperature-dependent phosphorylation.

Its subcellular location is the cytoplasm. It localises to the nucleus. Functionally, transcriptional activator that specifically binds DNA sequence 5'-AGAAnnTTCT-3' known as heat shock promoter elements (HSE). The sequence is that of Heat stress transcription factor A-7b (HSFA7B) from Arabidopsis thaliana (Mouse-ear cress).